A 115-amino-acid chain; its full sequence is Parathyroid hormone (115 aa).

Residues 1 to 25 form the signal peptide; the sequence is MIPAKDMAKVMIVMLAICFLTKSDG. Positions 26–31 are excised as a propeptide; that stretch reads KSVKKR. Positions 51-69 are important for receptor binding; the sequence is RVEWLRKKLQDVHNFIALG. Positions 72-96 are disordered; sequence LAPRDAGSQRPRKKEDNILVESHEK. Basic and acidic residues predominate over residues 84 to 96; it reads KKEDNILVESHEK.

The protein belongs to the parathyroid hormone family. In terms of assembly, interacts with PTH1R (via N-terminal extracellular domain).

It is found in the secreted. Functionally, parathyroid hormone elevates calcium level by dissolving the salts in bone and preventing their renal excretion. Acts by binding to its receptor, PTH1R, activating G protein-coupled receptor signaling. Stimulates [1-14C]-2-deoxy-D-glucose (2DG) transport and glycogen synthesis in osteoblastic cells. This is Parathyroid hormone (PTH) from Macaca fascicularis (Crab-eating macaque).